We begin with the raw amino-acid sequence, 230 residues long: UPF0500 protein C1orf216 homolog (230 aa).

The interval 1–103 (MFAAIQPGLA…AEPEKLSGAS (103 aa)) is disordered. The span at 60-73 (RSSSESPSDNQVFQ) shows a compositional bias: polar residues. Low complexity predominate over residues 85 to 94 (PPEGAEIPGA).

It belongs to the UPF0500 family.

The sequence is that of UPF0500 protein C1orf216 homolog from Mus musculus (Mouse).